Reading from the N-terminus, the 284-residue chain is MKQKVVSIGDIKVANDLPFVLFGGMNVLESRDLAMRICEHYVTVTQKLGIPYVFKASFDKANRSSIHSYRGPGLEEGMKIFQELKQQFGVKVITDVHEISQCQPVAEVVDVIQLPAFLARQTDLVEAMARTGAVINVKKPQFVSPGQMGNIVEKFKEAGNDQVILCDRGSNFGYDNLVVDMLGINVMVKATGGHPVIFDVTHALQCRDPFGSASGGRRAQVAELARAGMAVGLAGLFIEAHPEPNSAKCDGPSALPLDKLEPFLMQMKAIDDLVKSFPELDTSK.

The protein belongs to the KdsA family.

The protein resides in the cytoplasm. The catalysed reaction is D-arabinose 5-phosphate + phosphoenolpyruvate + H2O = 3-deoxy-alpha-D-manno-2-octulosonate-8-phosphate + phosphate. It participates in carbohydrate biosynthesis; 3-deoxy-D-manno-octulosonate biosynthesis; 3-deoxy-D-manno-octulosonate from D-ribulose 5-phosphate: step 2/3. The protein operates within bacterial outer membrane biogenesis; lipopolysaccharide biosynthesis. In Yersinia enterocolitica serotype O:8 / biotype 1B (strain NCTC 13174 / 8081), this protein is 2-dehydro-3-deoxyphosphooctonate aldolase.